Here is a 140-residue protein sequence, read N- to C-terminus: Small ribosomal subunit protein uS19 (140 aa).

It belongs to the universal ribosomal protein uS19 family.

Its function is as follows. Protein S19 forms a complex with S13 that binds strongly to the 16S ribosomal RNA. The polypeptide is Small ribosomal subunit protein uS19 (Natronomonas pharaonis (strain ATCC 35678 / DSM 2160 / CIP 103997 / JCM 8858 / NBRC 14720 / NCIMB 2260 / Gabara) (Halobacterium pharaonis)).